The sequence spans 154 residues: Ribonuclease H (154 aa).

Residues 9–150 (SHPHIIIYTD…ADALANKGVE (142 aa)) form the RNase H type-1 domain. 4 residues coordinate Mg(2+): D18, E56, D78, and D142.

This sequence belongs to the RNase H family. In terms of assembly, monomer. It depends on Mg(2+) as a cofactor.

It localises to the cytoplasm. The enzyme catalyses Endonucleolytic cleavage to 5'-phosphomonoester.. In terms of biological role, endonuclease that specifically degrades the RNA of RNA-DNA hybrids. The polypeptide is Ribonuclease H (Polynucleobacter asymbioticus (strain DSM 18221 / CIP 109841 / QLW-P1DMWA-1) (Polynucleobacter necessarius subsp. asymbioticus)).